A 118-amino-acid chain; its full sequence is MVESMIDRVLLELNRTDGVKGSMVVGKDGLVIASQLPGNVDAELVGAMASAAFGAAERTSSEIGLSGLEQTMIEGEHGKTLMVDAGEGILVVLTDAKVNLGLIRITMKRAADKIKAMF.

To M.jannaschii MJ0310 and MJ1340.

This is an uncharacterized protein from Methanocaldococcus jannaschii (strain ATCC 43067 / DSM 2661 / JAL-1 / JCM 10045 / NBRC 100440) (Methanococcus jannaschii).